The primary structure comprises 261 residues: Cytochrome c oxidase subunit 3 (261 aa).

Residues 1–15 (MTHQTHAYHMVNPSP) are Mitochondrial matrix-facing. The chain crosses the membrane as a helical span at residues 16 to 34 (WPLTGALSALLMTSGLIMW). Residues 35-40 (FHFNSV) lie on the Mitochondrial intermembrane side of the membrane. The chain crosses the membrane as a helical span at residues 41 to 66 (ALLMLGLTTNMLTMYQWWRDVIREST). The Mitochondrial matrix portion of the chain corresponds to 67–72 (FQGHHT). A helical transmembrane segment spans residues 73–105 (PNVQKGLRYGMILFIISEVLFFTGFFWAFYHSS). Over 106 to 128 (LAPTPELGGCWPPTGIHPLNPLE) the chain is Mitochondrial intermembrane. The helical transmembrane segment at 129–152 (VPLLNTSVLLASGVSITWAHHSLM) threads the bilayer. The Mitochondrial matrix segment spans residues 153-155 (EGN). The helical transmembrane segment at 156–183 (RNHMLQALFITIALGVYFTLLQASEYYE) threads the bilayer. Over 184–190 (APFTISD) the chain is Mitochondrial intermembrane. Residues 191–223 (GVYGSTFFVATGFHGLHVIIGSTFLIVCFFRQL) form a helical membrane-spanning segment. Residues 224–232 (KFHFTSSHH) lie on the Mitochondrial matrix side of the membrane. The chain crosses the membrane as a helical span at residues 233–256 (FGFEAAAWYWHFVDVVWLFLYVSI). The Mitochondrial intermembrane portion of the chain corresponds to 257–261 (YWWGS).

It belongs to the cytochrome c oxidase subunit 3 family. As to quaternary structure, component of the cytochrome c oxidase (complex IV, CIV), a multisubunit enzyme composed of 14 subunits. The complex is composed of a catalytic core of 3 subunits MT-CO1, MT-CO2 and MT-CO3, encoded in the mitochondrial DNA, and 11 supernumerary subunits COX4I, COX5A, COX5B, COX6A, COX6B, COX6C, COX7A, COX7B, COX7C, COX8 and NDUFA4, which are encoded in the nuclear genome. The complex exists as a monomer or a dimer and forms supercomplexes (SCs) in the inner mitochondrial membrane with NADH-ubiquinone oxidoreductase (complex I, CI) and ubiquinol-cytochrome c oxidoreductase (cytochrome b-c1 complex, complex III, CIII), resulting in different assemblies (supercomplex SCI(1)III(2)IV(1) and megacomplex MCI(2)III(2)IV(2)).

The protein resides in the mitochondrion inner membrane. It carries out the reaction 4 Fe(II)-[cytochrome c] + O2 + 8 H(+)(in) = 4 Fe(III)-[cytochrome c] + 2 H2O + 4 H(+)(out). Its function is as follows. Component of the cytochrome c oxidase, the last enzyme in the mitochondrial electron transport chain which drives oxidative phosphorylation. The respiratory chain contains 3 multisubunit complexes succinate dehydrogenase (complex II, CII), ubiquinol-cytochrome c oxidoreductase (cytochrome b-c1 complex, complex III, CIII) and cytochrome c oxidase (complex IV, CIV), that cooperate to transfer electrons derived from NADH and succinate to molecular oxygen, creating an electrochemical gradient over the inner membrane that drives transmembrane transport and the ATP synthase. Cytochrome c oxidase is the component of the respiratory chain that catalyzes the reduction of oxygen to water. Electrons originating from reduced cytochrome c in the intermembrane space (IMS) are transferred via the dinuclear copper A center (CU(A)) of subunit 2 and heme A of subunit 1 to the active site in subunit 1, a binuclear center (BNC) formed by heme A3 and copper B (CU(B)). The BNC reduces molecular oxygen to 2 water molecules using 4 electrons from cytochrome c in the IMS and 4 protons from the mitochondrial matrix. The polypeptide is Cytochrome c oxidase subunit 3 (MT-CO3) (Nanger granti (Grant's gazelle)).